The chain runs to 424 residues: Enolase (424 aa).

Gln162 provides a ligand contact to (2R)-2-phosphoglycerate. The Proton donor role is filled by Glu204. Residues Asp241, Glu284, and Asp311 each coordinate Mg(2+). (2R)-2-phosphoglycerate contacts are provided by Lys336, Arg365, Ser366, and Lys387. Lys336 functions as the Proton acceptor in the catalytic mechanism.

The protein belongs to the enolase family. The cofactor is Mg(2+).

The protein localises to the cytoplasm. The protein resides in the secreted. It localises to the cell surface. The catalysed reaction is (2R)-2-phosphoglycerate = phosphoenolpyruvate + H2O. Its pathway is carbohydrate degradation; glycolysis; pyruvate from D-glyceraldehyde 3-phosphate: step 4/5. Its function is as follows. Catalyzes the reversible conversion of 2-phosphoglycerate (2-PG) into phosphoenolpyruvate (PEP). It is essential for the degradation of carbohydrates via glycolysis. The protein is Enolase of Maricaulis maris (strain MCS10) (Caulobacter maris).